A 168-amino-acid chain; its full sequence is Transmembrane protein 31 (168 aa).

The segment covering 1–11 (MRLTEKSEGEQ) has biased composition (basic and acidic residues). The tract at residues 1–63 (MRLTEKSEGE…LPSRRTPTTS (63 aa)) is disordered. 2 stretches are compositionally biased toward polar residues: residues 13 to 22 (LKPNNSNAPN) and 35 to 48 (HTPA…ADTQ). Residues 49 to 63 (PSRCRLPSRRTPTTS) show a composition bias toward low complexity. The next 2 helical transmembrane spans lie at 119–139 (IGLP…YKFF) and 148–168 (FFIL…LIFF).

Its subcellular location is the membrane. The polypeptide is Transmembrane protein 31 (TMEM31) (Homo sapiens (Human)).